The following is a 125-amino-acid chain: Mitochondrial import inner membrane translocase subunit TIM16 (125 aa).

Positions 58–110 (EAQQILNVSKLSPEEVQKNYEHLFKVNDKSVGGSFYLQSKVVRAKERLDEELR) are J-like. A Phosphoserine modification is found at S69.

It belongs to the TIM16/PAM16 family. Probable component of the PAM complex at least composed of a mitochondrial HSP70 protein, GRPEL1 or GRPEL2, TIMM44, TIMM16/PAM16 and TIMM14/DNAJC19. Interacts with DNAJC19. Directly interacts with DNAJC15; this interaction counteracts DNAJC15-dependent stimulation of HSPA9 ATPase activity. Associates with the TIM23 complex. Expressed in trabecular bone and cartilage and by differentiated chondrocytes localized in the hypertrophic zone and by osteoblasts at early developmental stages.

The protein localises to the mitochondrion inner membrane. Its function is as follows. Regulates ATP-dependent protein translocation into the mitochondrial matrix. Inhibits DNAJC19 stimulation of HSPA9/Mortalin ATPase activity. This is Mitochondrial import inner membrane translocase subunit TIM16 from Mus musculus (Mouse).